The sequence spans 348 residues: L-threonine 3-dehydrogenase (348 aa).

Cys42 contacts Zn(2+). Active-site charge relay system residues include Thr44 and His47. Residues His67, Glu68, Cys97, Cys100, Cys103, and Cys111 each coordinate Zn(2+). NAD(+)-binding positions include Leu179, Glu199, Arg204, Leu266 to Leu268, and Ile291 to Thr292.

This sequence belongs to the zinc-containing alcohol dehydrogenase family. Homodimer. Homotetramer; dimer of dimers. The cofactor is Zn(2+).

The protein resides in the cytoplasm. The catalysed reaction is L-threonine + NAD(+) = (2S)-2-amino-3-oxobutanoate + NADH + H(+). It participates in amino-acid degradation; L-threonine degradation via oxydo-reductase pathway; glycine from L-threonine: step 1/2. With respect to regulation, is totally inhibited by EDTA in vitro. In terms of biological role, catalyzes the NAD(+)-dependent oxidation of L-threonine to 2-amino-3-ketobutyrate. Is much less efficient when using NADP(+) instead of NAD(+). To a lesser extent, also catalyzes the oxidation of L-serine and DL-threo-3-phenylserine, but not that of L-allo-threonine, D-threonine and D-allo-threonine and many other L-amino acids. The polypeptide is L-threonine 3-dehydrogenase (Pyrococcus horikoshii (strain ATCC 700860 / DSM 12428 / JCM 9974 / NBRC 100139 / OT-3)).